Consider the following 593-residue polypeptide: CTD kinase subunit alpha (593 aa).

Polar residues-rich tracts occupy residues 1–17 (MSYS…TEPN) and 29–51 (QLSG…FKNN). Residues 1 to 262 (MSYSKSTIYR…ESVPAPLPSP (262 aa)) are disordered. Phosphoserine is present on residues Ser56 and Ser58. A compositionally biased stretch (basic residues) spans 90 to 103 (RSRKSRRRKGKKAF). A phosphoserine mark is found at Ser104 and Ser109. Over residues 139–152 (SSSSASVSPISPSA) the composition is skewed to low complexity. Residues 160–170 (QASSFRRSPPS) show a composition bias toward polar residues. Over residues 198-215 (IPHETTSSDTQKKSSVSS) the composition is skewed to low complexity. The region spanning 277–561 (YEKIDQIGEG…AHETLMHEYF (285 aa)) is the Protein kinase domain. Residues 283-291 (IGEGTYGKV) and Lys306 contribute to the ATP site. The active-site Proton acceptor is Asp399.

It belongs to the protein kinase superfamily. CMGC Ser/Thr protein kinase family. CDC2/CDKX subfamily. CTDK-I consists of three subunits, ctk1/lsk1, ctk2/lsc1 and ctk3 (also called alpha, beta and gamma). Interacts with ctk2/lsc1. This interaction is dependent on kinase activity.

The protein resides in the nucleus. It localises to the nucleolus. The catalysed reaction is [DNA-directed RNA polymerase] + ATP = phospho-[DNA-directed RNA polymerase] + ADP + H(+). In terms of biological role, catalytic subunit of the CTDK-I complex, which hyperphosphorylates the C-terminal heptapeptide repeat domain (CTD) of the largest RNA polymerase II subunit. Involved in RNA polymerase II transcriptional elongation and pre-mRNA 3'-end processing. Together with ctk2/lsc1, required for the regulation of cytokinesis by phosphorylating 'Ser-2' residues found in the heptad repeats of the CTD. Required for nuclear localization of ctk2/lsc1. Positively regulates the septation initiation network (SIN) and promotes successful completion of cytokinesis in response to perturbation of the actomyosin ring. Acts in parallel to clp1 to promote actomyosin ring stability upon cytokinesis checkpoint activation. In Schizosaccharomyces pombe (strain 972 / ATCC 24843) (Fission yeast), this protein is CTD kinase subunit alpha.